A 231-amino-acid chain; its full sequence is Large ribosomal subunit protein uL1 (231 aa).

This sequence belongs to the universal ribosomal protein uL1 family. In terms of assembly, part of the 50S ribosomal subunit.

Functionally, binds directly to 23S rRNA. The L1 stalk is quite mobile in the ribosome, and is involved in E site tRNA release. Protein L1 is also a translational repressor protein, it controls the translation of the L11 operon by binding to its mRNA. The protein is Large ribosomal subunit protein uL1 of Mycoplasmopsis synoviae (strain 53) (Mycoplasma synoviae).